The chain runs to 722 residues: Dual specificity tyrosine-phosphorylation-regulated kinase 2 (722 aa).

Phosphoserine is present on S25. Positions T54–M127 are disordered. The segment covering G66–G119 has biased composition (low complexity). In terms of domain architecture, Protein kinase spans Y198–L494. ATP contacts are provided by residues I204 to V212 and K227. D324 acts as the Proton acceptor in catalysis. Y356 and Y358 each carry phosphotyrosine; by autocatalysis. 4 disordered regions span residues L494–V519, T557–K582, G624–T643, and T679–A722. Residues R506–V519 are compositionally biased toward low complexity. Residues T557–G576 are compositionally biased toward polar residues. 2 stretches are compositionally biased toward low complexity: residues G626 to A635 and G689 to S707.

Belongs to the protein kinase superfamily. CMGC Ser/Thr protein kinase family. MNB/DYRK subfamily. Mg(2+) is required as a cofactor. Post-translationally, phosphorylated on serine/threonine residues.

It is found in the cytoplasm. It carries out the reaction L-seryl-[protein] + ATP = O-phospho-L-seryl-[protein] + ADP + H(+). The catalysed reaction is L-threonyl-[protein] + ATP = O-phospho-L-threonyl-[protein] + ADP + H(+). It catalyses the reaction L-tyrosyl-[protein] + ATP = O-phospho-L-tyrosyl-[protein] + ADP + H(+). Its activity is regulated as follows. Autophosphorylates on Tyr-356 and Tyr-358. Its function is as follows. In vitro; can phosphorylate exogenous substrates on Ser and Thr residues. May have a physiological role in development being involved in cellular growth and differentiation. This is Dual specificity tyrosine-phosphorylation-regulated kinase 2 from Drosophila melanogaster (Fruit fly).